The primary structure comprises 382 residues: Alkanesulfonate monooxygenase (382 aa).

This sequence belongs to the SsuD family.

It catalyses the reaction an alkanesulfonate + FMNH2 + O2 = an aldehyde + FMN + sulfite + H2O + 2 H(+). Its function is as follows. Catalyzes the desulfonation of aliphatic sulfonates. This is Alkanesulfonate monooxygenase from Pseudomonas putida (strain GB-1).